Reading from the N-terminus, the 198-residue chain is Holliday junction branch migration complex subunit RuvA (198 aa).

The domain I stretch occupies residues 1–63; that stretch reads MYSYIIGVIT…EDASILYGFS (63 aa). The domain II stretch occupies residues 64–142; that stretch reads SQKERELFNL…KDFVPSEKPV (79 aa). A flexible linker region spans residues 143–153; the sequence is NKEVKRSNDSE. The interval 153–198 is domain III; the sequence is EFAREALLQLGYFKNDVDAFIENTDISGLSIEDIMKKAMKSLDSSR.

The protein belongs to the RuvA family. Homotetramer. Forms an RuvA(8)-RuvB(12)-Holliday junction (HJ) complex. HJ DNA is sandwiched between 2 RuvA tetramers; dsDNA enters through RuvA and exits via RuvB. An RuvB hexamer assembles on each DNA strand where it exits the tetramer. Each RuvB hexamer is contacted by two RuvA subunits (via domain III) on 2 adjacent RuvB subunits; this complex drives branch migration. In the full resolvosome a probable DNA-RuvA(4)-RuvB(12)-RuvC(2) complex forms which resolves the HJ.

The protein localises to the cytoplasm. Its function is as follows. The RuvA-RuvB-RuvC complex processes Holliday junction (HJ) DNA during genetic recombination and DNA repair, while the RuvA-RuvB complex plays an important role in the rescue of blocked DNA replication forks via replication fork reversal (RFR). RuvA specifically binds to HJ cruciform DNA, conferring on it an open structure. The RuvB hexamer acts as an ATP-dependent pump, pulling dsDNA into and through the RuvAB complex. HJ branch migration allows RuvC to scan DNA until it finds its consensus sequence, where it cleaves and resolves the cruciform DNA. In Finegoldia magna (strain ATCC 29328 / DSM 20472 / WAL 2508) (Peptostreptococcus magnus), this protein is Holliday junction branch migration complex subunit RuvA.